The primary structure comprises 169 residues: 3-hydroxyacyl-[acyl-carrier-protein] dehydratase FabZ (169 aa).

Residue H66 is part of the active site.

Belongs to the thioester dehydratase family. FabZ subfamily.

It is found in the cytoplasm. It catalyses the reaction a (3R)-hydroxyacyl-[ACP] = a (2E)-enoyl-[ACP] + H2O. In terms of biological role, involved in unsaturated fatty acids biosynthesis. Catalyzes the dehydration of short chain beta-hydroxyacyl-ACPs and long chain saturated and unsaturated beta-hydroxyacyl-ACPs. The chain is 3-hydroxyacyl-[acyl-carrier-protein] dehydratase FabZ from Helicobacter hepaticus (strain ATCC 51449 / 3B1).